Consider the following 296-residue polypeptide: Cytidine deaminase (296 aa).

CMP/dCMP-type deaminase domains follow at residues 52 to 167 (SPVE…YLPD) and 191 to 296 (QGHD…YISL). A substrate-binding site is contributed by 93–95 (NQE). Position 106 (H106) interacts with Zn(2+). Residue E108 is the Proton donor of the active site. The Zn(2+) site is built by C133 and C136.

Belongs to the cytidine and deoxycytidylate deaminase family. Homodimer. Zn(2+) is required as a cofactor.

The catalysed reaction is cytidine + H2O + H(+) = uridine + NH4(+). It carries out the reaction 2'-deoxycytidine + H2O + H(+) = 2'-deoxyuridine + NH4(+). In terms of biological role, this enzyme scavenges exogenous and endogenous cytidine and 2'-deoxycytidine for UMP synthesis. This is Cytidine deaminase from Mannheimia succiniciproducens (strain KCTC 0769BP / MBEL55E).